A 530-amino-acid chain; its full sequence is Na(+)/H(+) antiporter NhaB (530 aa).

Helical transmembrane passes span 13 to 33, 98 to 118, 123 to 145, 149 to 166, 205 to 225, 238 to 258, 308 to 328, 330 to 350, 356 to 376, 393 to 413, 451 to 471, and 480 to 500; these read FLGK…IINP, LLLV…LFIF, LGIQ…LSAF, LTVI…YSIY, LLMH…VGEP, FGEF…CGIL, IAVW…LIGL, VIIL…GKAF, FTAL…QALF, LALF…VFVG, ATPN…APLI, and IMAL…IVFF.

The protein belongs to the NhaB Na(+)/H(+) (TC 2.A.34) antiporter family.

The protein localises to the cell inner membrane. It carries out the reaction 2 Na(+)(in) + 3 H(+)(out) = 2 Na(+)(out) + 3 H(+)(in). Na(+)/H(+) antiporter that extrudes sodium in exchange for external protons. The chain is Na(+)/H(+) antiporter NhaB from Vibrio atlanticus (strain LGP32) (Vibrio splendidus (strain Mel32)).